A 96-amino-acid polypeptide reads, in one-letter code: Cytochrome c oxidase assembly factor 3 homolog, mitochondrial (96 aa).

Residues 1–50 (MSSQGEPKPEAQFAKRIDPTKEALTKEQLQFIRQVEMAQWKKKTDKLRGR) are Mitochondrial matrix-facing. The helical transmembrane segment at 51 to 73 (NVATGLAIGAVVLGIYGYTFYSV) threads the bilayer. Topologically, residues 74 to 96 (SQEKIMDEIDEEAKVRVPKTGAN) are mitochondrial intermembrane.

Belongs to the COA3 family. Core component of the MITRAC (mitochondrial translation regulation assembly intermediate of cytochrome c oxidase complex) complex.

The protein resides in the mitochondrion inner membrane. Functionally, core component of the MITRAC (mitochondrial translation regulation assembly intermediate of cytochrome c oxidase complex) complex, that regulates cytochrome c oxidase assembly. MITRAC complexes regulate both translation of mitochondrial encoded components and assembly of nuclear-encoded components imported in mitochondrion. Required for efficient translation of MT-CO1 and mitochondrial respiratory chain complex IV assembly. This is Cytochrome c oxidase assembly factor 3 homolog, mitochondrial (coa3a) from Danio rerio (Zebrafish).